A 495-amino-acid chain; its full sequence is Polybrominated aromatic compounds synthase (495 aa).

Position 437 (C437) interacts with heme.

It belongs to the cytochrome P450 family. Heme serves as cofactor.

Functionally, cytochrome P450 protein involved in the biosynthesis of polybrominated aromatic organic compounds. In the presence of ferredoxin, ferredoxin reductase and NADH, catalyzes the coupling of bromophenols and bromopyrroles, forming various polybrominated biphenyls and hydroxylated polybrominated diphenyl ethers (OH-BDE). Can also mediate the heterocoupling of 3,5-dibromocatechol, forming six different compounds, including polybrominated dibenzo-p-dioxins, which are among the most toxic molecules known to man. In Marinomonas mediterranea (strain ATCC 700492 / JCM 21426 / NBRC 103028 / MMB-1), this protein is Polybrominated aromatic compounds synthase.